Here is a 278-residue protein sequence, read N- to C-terminus: Probable cytochrome c oxidase subunit 3 (278 aa).

6 consecutive transmembrane segments (helical) span residues 21–41, 46–66, 89–109, 174–194, 212–232, and 256–276; these read PWPV…VSFM, FNIY…YSWW, IGMA…FASF, CVTA…MQAY, FYLA…FLIV, and AWYW…VYIF.

The protein belongs to the cytochrome c oxidase subunit 3 family.

It is found in the cell membrane. The enzyme catalyses 4 Fe(II)-[cytochrome c] + O2 + 8 H(+)(in) = 4 Fe(III)-[cytochrome c] + 2 H2O + 4 H(+)(out). This is Probable cytochrome c oxidase subunit 3 (ctaE) from Rickettsia felis (strain ATCC VR-1525 / URRWXCal2) (Rickettsia azadi).